Here is a 502-residue protein sequence, read N- to C-terminus: Inosine-5'-monophosphate dehydrogenase 2 (502 aa).

Ser2 carries the N-acetylserine modification. In terms of domain architecture, CBS spans 166–225 (MKSCENKDYYVPWDIDLDKIEAVLEDKQKGFVVLEKEGETVNVVTKDDVERVKGYPKLGS). Residues 264-266 (DSS) and 314-316 (GMG) each bind NAD(+). Residues Gly316 and Gly318 each coordinate K(+). Residue Ser319 coordinates IMP. Cys321 is a binding site for K(+). Cys321 (thioimidate intermediate) is an active-site residue. IMP-binding positions include 354-356 (DGG), 377-378 (GS), and 401-405 (YRGMG). Arg417 acts as the Proton acceptor in catalysis. Gln429 contributes to the IMP binding site. 3 residues coordinate K(+): Glu488, Gly489, and Gly490.

This sequence belongs to the IMPDH/GMPR family. In terms of assembly, homotetramer. K(+) serves as cofactor.

The protein resides in the cytoplasm. It catalyses the reaction IMP + NAD(+) + H2O = XMP + NADH + H(+). It participates in purine metabolism; XMP biosynthesis via de novo pathway; XMP from IMP: step 1/1. With respect to regulation, mycophenolic acid (MPA) is a non-competitive inhibitor that prevents formation of the closed enzyme conformation by binding to the same site as the amobile flap. In contrast, mizoribine monophosphate (MZP) is a competitive inhibitor that induces the closed conformation. MPA is a potent inhibitor of mammalian IMPDHs but a poor inhibitor of the bacterial enzymes. MZP is a more potent inhibitor of bacterial IMPDH. Its function is as follows. Catalyzes the conversion of inosine 5'-phosphate (IMP) to xanthosine 5'-phosphate (XMP), the first committed and rate-limiting step in the de novo synthesis of guanine nucleotides, and therefore plays an important role in the regulation of cell growth. The polypeptide is Inosine-5'-monophosphate dehydrogenase 2 (Arabidopsis thaliana (Mouse-ear cress)).